The following is a 219-amino-acid chain: N-(5'-phosphoribosyl)anthranilate isomerase (219 aa).

Belongs to the TrpF family.

It catalyses the reaction N-(5-phospho-beta-D-ribosyl)anthranilate = 1-(2-carboxyphenylamino)-1-deoxy-D-ribulose 5-phosphate. The protein operates within amino-acid biosynthesis; L-tryptophan biosynthesis; L-tryptophan from chorismate: step 3/5. In Chloroherpeton thalassium (strain ATCC 35110 / GB-78), this protein is N-(5'-phosphoribosyl)anthranilate isomerase.